We begin with the raw amino-acid sequence, 224 residues long: Elongation factor Ts (224 aa).

The tract at residues 81–84 is involved in Mg(2+) ion dislocation from EF-Tu; it reads TDFV.

It belongs to the EF-Ts family.

It is found in the cytoplasm. Functionally, associates with the EF-Tu.GDP complex and induces the exchange of GDP to GTP. It remains bound to the aminoacyl-tRNA.EF-Tu.GTP complex up to the GTP hydrolysis stage on the ribosome. This Finegoldia magna (strain ATCC 29328 / DSM 20472 / WAL 2508) (Peptostreptococcus magnus) protein is Elongation factor Ts.